Reading from the N-terminus, the 732-residue chain is Catalase-peroxidase (732 aa).

Basic and acidic residues predominate over residues 1–11 (MDAKTDDKDGG). The disordered stretch occupies residues 1–24 (MDAKTDDKDGGKCPFPHGGGRGRR). The segment at residues 97-219 (WHSAGTYRTT…LGAVQMGLIY (123 aa)) is a cross-link (tryptophyl-tyrosyl-methioninium (Trp-Tyr) (with M-245)). Catalysis depends on H98, which acts as the Proton acceptor. Residues 219 to 245 (YVNPEGPNGNPDPVAAAKDIRETFARM) constitute a cross-link (tryptophyl-tyrosyl-methioninium (Tyr-Met) (with W-97)). H260 is a heme b binding site.

It belongs to the peroxidase family. Peroxidase/catalase subfamily. Homodimer or homotetramer. The cofactor is heme b. Formation of the three residue Trp-Tyr-Met cross-link is important for the catalase, but not the peroxidase activity of the enzyme.

It catalyses the reaction H2O2 + AH2 = A + 2 H2O. It carries out the reaction 2 H2O2 = O2 + 2 H2O. Functionally, bifunctional enzyme with both catalase and broad-spectrum peroxidase activity. In Rhodopseudomonas palustris (strain HaA2), this protein is Catalase-peroxidase.